The sequence spans 175 residues: Peptide deformylase (175 aa).

Fe cation is bound by residues Cys-94 and His-136. Glu-137 is an active-site residue. His-140 contributes to the Fe cation binding site.

Belongs to the polypeptide deformylase family. Fe(2+) serves as cofactor.

The catalysed reaction is N-terminal N-formyl-L-methionyl-[peptide] + H2O = N-terminal L-methionyl-[peptide] + formate. Removes the formyl group from the N-terminal Met of newly synthesized proteins. Requires at least a dipeptide for an efficient rate of reaction. N-terminal L-methionine is a prerequisite for activity but the enzyme has broad specificity at other positions. The chain is Peptide deformylase from Brucella suis biovar 1 (strain 1330).